We begin with the raw amino-acid sequence, 159 residues long: Thioredoxin O2, mitochondrial (159 aa).

Residue S40 is modified to Phosphoserine. Positions 43–159 (FAEGDRSSFV…LKSVMEQLYK (117 aa)) constitute a Thioredoxin domain. Catalysis depends on nucleophile residues C83 and C86. C83 and C86 form a disulfide bridge.

The protein belongs to the thioredoxin family. Plant O-type subfamily.

The protein resides in the mitochondrion. Thiol-disulfide oxidoreductase that may participate in various redox reactions. Possesses insulin disulfide bonds reducing activity. Reduced by thioredoxin reductases NTRA and NTRB. This Arabidopsis thaliana (Mouse-ear cress) protein is Thioredoxin O2, mitochondrial.